We begin with the raw amino-acid sequence, 396 residues long: Ribosomal RNA large subunit methyltransferase I (396 aa).

The PUA domain maps to 2–81; sequence SVRLVLAKGR…ETIDIAFFTR (80 aa).

This sequence belongs to the methyltransferase superfamily. RlmI family.

It localises to the cytoplasm. The enzyme catalyses cytidine(1962) in 23S rRNA + S-adenosyl-L-methionine = 5-methylcytidine(1962) in 23S rRNA + S-adenosyl-L-homocysteine + H(+). Functionally, specifically methylates the cytosine at position 1962 (m5C1962) of 23S rRNA. The chain is Ribosomal RNA large subunit methyltransferase I from Cronobacter sakazakii (strain ATCC BAA-894) (Enterobacter sakazakii).